A 238-amino-acid polypeptide reads, in one-letter code: UPF0173 metal-dependent hydrolase Helmi_16730 (238 aa).

It belongs to the UPF0173 family.

The chain is UPF0173 metal-dependent hydrolase Helmi_16730 from Heliobacterium modesticaldum (strain ATCC 51547 / Ice1).